A 335-amino-acid chain; its full sequence is Large ribosomal subunit protein uL3 (335 aa).

This sequence belongs to the universal ribosomal protein uL3 family. As to quaternary structure, part of the 50S ribosomal subunit. Forms a cluster with proteins L14 and L24e.

Functionally, one of the primary rRNA binding proteins, it binds directly near the 3'-end of the 23S rRNA, where it nucleates assembly of the 50S subunit. The sequence is that of Large ribosomal subunit protein uL3 from Methanocaldococcus jannaschii (strain ATCC 43067 / DSM 2661 / JAL-1 / JCM 10045 / NBRC 100440) (Methanococcus jannaschii).